The primary structure comprises 564 residues: Arginine--tRNA ligase (564 aa).

A 'HIGH' region motif is present at residues P122–H132.

The protein belongs to the class-I aminoacyl-tRNA synthetase family. In terms of assembly, monomer.

The protein resides in the cytoplasm. The enzyme catalyses tRNA(Arg) + L-arginine + ATP = L-arginyl-tRNA(Arg) + AMP + diphosphate. The polypeptide is Arginine--tRNA ligase (Lactococcus lactis subsp. cremoris (strain SK11)).